Reading from the N-terminus, the 343-residue chain is N-acetyl-gamma-glutamyl-phosphate reductase (343 aa).

Cysteine 149 is a catalytic residue.

Belongs to the NAGSA dehydrogenase family. Type 1 subfamily.

Its subcellular location is the cytoplasm. It carries out the reaction N-acetyl-L-glutamate 5-semialdehyde + phosphate + NADP(+) = N-acetyl-L-glutamyl 5-phosphate + NADPH + H(+). Its pathway is amino-acid biosynthesis; L-arginine biosynthesis; N(2)-acetyl-L-ornithine from L-glutamate: step 3/4. Its function is as follows. Catalyzes the NADPH-dependent reduction of N-acetyl-5-glutamyl phosphate to yield N-acetyl-L-glutamate 5-semialdehyde. This Methanococcus maripaludis (strain C6 / ATCC BAA-1332) protein is N-acetyl-gamma-glutamyl-phosphate reductase.